A 96-amino-acid chain; its full sequence is Aspartyl/glutamyl-tRNA(Asn/Gln) amidotransferase subunit C (96 aa).

It belongs to the GatC family. As to quaternary structure, heterotrimer of A, B and C subunits.

The catalysed reaction is L-glutamyl-tRNA(Gln) + L-glutamine + ATP + H2O = L-glutaminyl-tRNA(Gln) + L-glutamate + ADP + phosphate + H(+). It catalyses the reaction L-aspartyl-tRNA(Asn) + L-glutamine + ATP + H2O = L-asparaginyl-tRNA(Asn) + L-glutamate + ADP + phosphate + 2 H(+). Allows the formation of correctly charged Asn-tRNA(Asn) or Gln-tRNA(Gln) through the transamidation of misacylated Asp-tRNA(Asn) or Glu-tRNA(Gln) in organisms which lack either or both of asparaginyl-tRNA or glutaminyl-tRNA synthetases. The reaction takes place in the presence of glutamine and ATP through an activated phospho-Asp-tRNA(Asn) or phospho-Glu-tRNA(Gln). In Acaryochloris marina (strain MBIC 11017), this protein is Aspartyl/glutamyl-tRNA(Asn/Gln) amidotransferase subunit C.